Consider the following 254-residue polypeptide: Homeobox protein BarH-like 1 (254 aa).

A disordered region spans residues 1–20; the sequence is MQRPGEPGAARFGPPEGCAD. Residues 142–201 constitute a DNA-binding region (homeobox); sequence GRRSRTVFTELQLMGLEKRFEKQKYLSTPDRIDLAESLGLSQLQVKTWYQNRRMKWKKIV. A disordered region spans residues 204-254; that stretch reads GGGLESPTKPKGRPKKNSIPTSEQLTEQERAKDAEKPAEVPGEPSDRSRED. Residues 230–254 show a composition bias toward basic and acidic residues; sequence EQERAKDAEKPAEVPGEPSDRSRED.

Belongs to the BAR homeobox family. In terms of tissue distribution, widely expressed. Expressed at higher levels in testis and heart. Detected in craniofacial tissue and adult iris, but not in lymphocytes, fibroblasts, choroid retina, retinal pigment epithelium, kidney, or fetal liver.

It localises to the nucleus. In terms of biological role, transcription factor, which is involved in craniofacial development, in odontogenesis and in stomach organogenesis. May have a role in the differentiation of molars from incisors. Plays a role in suppressing endodermal Wnt activity. Binds to a regulatory module of the NCAM promoter. This Homo sapiens (Human) protein is Homeobox protein BarH-like 1 (BARX1).